A 38-amino-acid chain; its full sequence is NAD-reducing hydrogenase HoxS subunit beta (38 aa).

Belongs to the [NiFe]/[NiFeSe] hydrogenase large subunit family. In terms of assembly, tetramer of an alpha and a gamma subunits (flavin-containing dimer), and a delta and a nickel-containing beta subunits (hydrogenase dimer). FMN serves as cofactor. It depends on Ni(2+) as a cofactor.

The protein localises to the cytoplasm. The catalysed reaction is H2 + NAD(+) = NADH + H(+). The protein is NAD-reducing hydrogenase HoxS subunit beta (hoxH) of Rhodococcus opacus (Nocardia opaca).